The primary structure comprises 213 residues: Orotate phosphoribosyltransferase (213 aa).

K26 provides a ligand contact to 5-phospho-alpha-D-ribose 1-diphosphate. 34-35 contacts orotate; it reads FF. 5-phospho-alpha-D-ribose 1-diphosphate contacts are provided by residues 72 to 73, R99, K100, K103, H105, and 124 to 132; these read YK and DDVITAGTA. Orotate contacts are provided by T128 and R156.

The protein belongs to the purine/pyrimidine phosphoribosyltransferase family. PyrE subfamily. As to quaternary structure, homodimer. Mg(2+) serves as cofactor.

It carries out the reaction orotidine 5'-phosphate + diphosphate = orotate + 5-phospho-alpha-D-ribose 1-diphosphate. It functions in the pathway pyrimidine metabolism; UMP biosynthesis via de novo pathway; UMP from orotate: step 1/2. Functionally, catalyzes the transfer of a ribosyl phosphate group from 5-phosphoribose 1-diphosphate to orotate, leading to the formation of orotidine monophosphate (OMP). This chain is Orotate phosphoribosyltransferase, found in Enterobacter sp. (strain 638).